The sequence spans 157 residues: 2-C-methyl-D-erythritol 2,4-cyclodiphosphate synthase (157 aa).

The a divalent metal cation site is built by Asp8 and His10. Residues 8–10 and 34–35 contribute to the 4-CDP-2-C-methyl-D-erythritol 2-phosphate site; these read DVH and HS. His42 is a binding site for a divalent metal cation. Residues 56 to 58, 61 to 65, 100 to 106, 132 to 135, Phe139, and Arg142 each bind 4-CDP-2-C-methyl-D-erythritol 2-phosphate; these read DIG, FPDTD, AQAPKMA, and TTTE.

Belongs to the IspF family. In terms of assembly, homotrimer. Requires a divalent metal cation as cofactor.

It catalyses the reaction 4-CDP-2-C-methyl-D-erythritol 2-phosphate = 2-C-methyl-D-erythritol 2,4-cyclic diphosphate + CMP. It participates in isoprenoid biosynthesis; isopentenyl diphosphate biosynthesis via DXP pathway; isopentenyl diphosphate from 1-deoxy-D-xylulose 5-phosphate: step 4/6. Its function is as follows. Involved in the biosynthesis of isopentenyl diphosphate (IPP) and dimethylallyl diphosphate (DMAPP), two major building blocks of isoprenoid compounds. Catalyzes the conversion of 4-diphosphocytidyl-2-C-methyl-D-erythritol 2-phosphate (CDP-ME2P) to 2-C-methyl-D-erythritol 2,4-cyclodiphosphate (ME-CPP) with a corresponding release of cytidine 5-monophosphate (CMP). In Pseudomonas aeruginosa (strain ATCC 15692 / DSM 22644 / CIP 104116 / JCM 14847 / LMG 12228 / 1C / PRS 101 / PAO1), this protein is 2-C-methyl-D-erythritol 2,4-cyclodiphosphate synthase.